Reading from the N-terminus, the 336-residue chain is Aspartate--ammonia ligase (336 aa).

It belongs to the class-II aminoacyl-tRNA synthetase family. AsnA subfamily.

It localises to the cytoplasm. It catalyses the reaction L-aspartate + NH4(+) + ATP = L-asparagine + AMP + diphosphate + H(+). It functions in the pathway amino-acid biosynthesis; L-asparagine biosynthesis; L-asparagine from L-aspartate (ammonia route): step 1/1. The polypeptide is Aspartate--ammonia ligase (Lactobacillus johnsonii (strain CNCM I-12250 / La1 / NCC 533)).